The primary structure comprises 124 residues: MPTIQQLIRSERYKLKKKTKSPALKQCPQRRGVCTRVYTTTPKKPNSALRKVARVRLTSGFEVTAYIPGIGHNLQEHSVVLIRGGRVKDLPGVRYHIVRGTLDATGVKDRKQGRSKYGAKRPKE.

Residue Asp-89 is modified to 3-methylthioaspartic acid. A disordered region spans residues 104–124; that stretch reads ATGVKDRKQGRSKYGAKRPKE. Residues 113 to 124 show a composition bias toward basic residues; it reads GRSKYGAKRPKE.

It belongs to the universal ribosomal protein uS12 family. In terms of assembly, part of the 30S ribosomal subunit. Contacts proteins S8 and S17. May interact with IF1 in the 30S initiation complex.

With S4 and S5 plays an important role in translational accuracy. Functionally, interacts with and stabilizes bases of the 16S rRNA that are involved in tRNA selection in the A site and with the mRNA backbone. Located at the interface of the 30S and 50S subunits, it traverses the body of the 30S subunit contacting proteins on the other side and probably holding the rRNA structure together. The combined cluster of proteins S8, S12 and S17 appears to hold together the shoulder and platform of the 30S subunit. In Picosynechococcus sp. (strain ATCC 27264 / PCC 7002 / PR-6) (Agmenellum quadruplicatum), this protein is Small ribosomal subunit protein uS12.